The primary structure comprises 62 residues: Temporin-La (62 aa).

The signal sequence occupies residues 1 to 22; sequence MFPLKKSLLLLFFLGTINLSFC. Residues 23–47 constitute a propeptide that is removed on maturation; that stretch reads EEERDVDQDERRDDPGERNVQVEKR. The residue at position 60 (leucine 60) is a Leucine amide.

Belongs to the frog skin active peptide (FSAP) family. Temporin subfamily. In terms of tissue distribution, expressed by the skin glands.

Its subcellular location is the secreted. It is found in the target cell membrane. In terms of biological role, antimicrobial peptide with amphipathic alpha-helical structure that acts against both Gram-positive and Gram-negative bacteria and the fungus Candida albicans. Is active against S.aureus ATCC 25923 (MIC=2.5 ug/ml), S.suis 2 CVCC 606 (MIC=15.6 ug/ml), Salmonella ATCC 20020 (MIC=15.6 ug/ml), P.aeruginosa ATCC 227853 (MIC=60 ug/ml), and C.albicans ATCC10231 (MIC=31.25 ug/ml). Is not active against B.subtilis ADB403, E.coli ATCC 25922, and K.pneumoniae ATCC 700603. Also shows a strong antitumor activity, but no hemolytic activity. This chain is Temporin-La, found in Aquarana catesbeiana (American bullfrog).